We begin with the raw amino-acid sequence, 327 residues long: Biotin synthase (327 aa).

The Radical SAM core domain maps to 51–278; the sequence is QTIQLSTLMS…KSYVRLSAGR (228 aa). Positions 66, 70, and 73 each coordinate [4Fe-4S] cluster. Residues C110, C141, C201, and R273 each contribute to the [2Fe-2S] cluster site.

This sequence belongs to the radical SAM superfamily. Biotin synthase family. In terms of assembly, homodimer. [4Fe-4S] cluster serves as cofactor. It depends on [2Fe-2S] cluster as a cofactor.

It carries out the reaction (4R,5S)-dethiobiotin + (sulfur carrier)-SH + 2 reduced [2Fe-2S]-[ferredoxin] + 2 S-adenosyl-L-methionine = (sulfur carrier)-H + biotin + 2 5'-deoxyadenosine + 2 L-methionine + 2 oxidized [2Fe-2S]-[ferredoxin]. The protein operates within cofactor biosynthesis; biotin biosynthesis; biotin from 7,8-diaminononanoate: step 2/2. Catalyzes the conversion of dethiobiotin (DTB) to biotin by the insertion of a sulfur atom into dethiobiotin via a radical-based mechanism. The protein is Biotin synthase of Histophilus somni (strain 2336) (Haemophilus somnus).